A 249-amino-acid chain; its full sequence is Probable transcriptional regulatory protein aq_1575 (249 aa).

Belongs to the TACO1 family.

The protein localises to the cytoplasm. This Aquifex aeolicus (strain VF5) protein is Probable transcriptional regulatory protein aq_1575.